Consider the following 568-residue polypeptide: Urease subunit alpha (568 aa).

Ni(2+) is bound by residues His134, His136, and Lys217. At Lys217 the chain carries N6-carboxylysine. His219 contributes to the substrate binding site. Ni(2+) contacts are provided by His246 and His272. His320 serves as the catalytic Proton donor. Position 360 (Asp360) interacts with Ni(2+).

It belongs to the metallo-dependent hydrolases superfamily. Urease alpha subunit family. In terms of assembly, heterotrimer of UreA (gamma), UreB (beta) and UreC (alpha) subunits. Three heterotrimers associate to form the active enzyme. It depends on Ni cation as a cofactor. Carboxylation allows a single lysine to coordinate two nickel ions.

The protein resides in the cytoplasm. It carries out the reaction urea + 2 H2O + H(+) = hydrogencarbonate + 2 NH4(+). The protein operates within nitrogen metabolism; urea degradation; CO(2) and NH(3) from urea (urease route): step 1/1. This is Urease subunit alpha from Marinomonas sp. (strain MWYL1).